A 441-amino-acid chain; its full sequence is Apolipoprotein N-acyltransferase (441 aa).

7 helical membrane passes run 23 to 43 (IIFKIIKVFFIAILLSNSIYL), 45 to 65 (FFENIFTQTISPFLAIWGLVL), 75 to 95 (YFWIGFFVGILWFWWIGLSSI), 97 to 117 (FNLNYLVPIIPIIIGFIYGLL), 133 to 153 (GIFCISFIHPLGFDWFNWGIF), 156 to 176 (YGFFDPSYRGIICIFLIAYFI), and 178 to 198 (EGYISRYYKIAIVLILFFSGF). A CN hydrolase domain is found at 215–441 (INTNISQDQK…LSKEIFNDKK (227 aa)). Glu-256 (proton acceptor) is an active-site residue. Lys-310 is a catalytic residue. Catalysis depends on Cys-359, which acts as the Nucleophile.

It belongs to the CN hydrolase family. Apolipoprotein N-acyltransferase subfamily.

The protein localises to the cell inner membrane. It catalyses the reaction N-terminal S-1,2-diacyl-sn-glyceryl-L-cysteinyl-[lipoprotein] + a glycerophospholipid = N-acyl-S-1,2-diacyl-sn-glyceryl-L-cysteinyl-[lipoprotein] + a 2-acyl-sn-glycero-3-phospholipid + H(+). The protein operates within protein modification; lipoprotein biosynthesis (N-acyl transfer). Functionally, catalyzes the phospholipid dependent N-acylation of the N-terminal cysteine of apolipoprotein, the last step in lipoprotein maturation. In Campylobacter jejuni subsp. jejuni serotype O:2 (strain ATCC 700819 / NCTC 11168), this protein is Apolipoprotein N-acyltransferase.